Here is a 365-residue protein sequence, read N- to C-terminus: N-glycosylase/DNA lyase OGG1 (365 aa).

Over residues 1-16 the composition is skewed to polar residues; the sequence is MKRPRPTSQPSISSTV. The disordered stretch occupies residues 1–24; it reads MKRPRPTSQPSISSTVKPPLSPPV. DNA-binding residues include Asn162, Arg167, and Arg215. The Schiff-base intermediate with DNA role is filled by Lys261. 8-oxoguanine-binding residues include Pro278 and Asp280. Residue His282 participates in DNA binding. Gln324 and Phe328 together coordinate 8-oxoguanine.

The protein belongs to the type-1 OGG1 family. Expressed in stems, roots, rosette and cauline leaves, flowers and seeds.

Its subcellular location is the nucleus. It catalyses the reaction 2'-deoxyribonucleotide-(2'-deoxyribose 5'-phosphate)-2'-deoxyribonucleotide-DNA = a 3'-end 2'-deoxyribonucleotide-(2,3-dehydro-2,3-deoxyribose 5'-phosphate)-DNA + a 5'-end 5'-phospho-2'-deoxyribonucleoside-DNA + H(+). In terms of biological role, involved in repair of DNA damaged by oxidation by incising DNA at 8-oxoG residues. Excises 7,8-dihydro-8-oxoguanine and 2,6-diamino-4-hydroxy-5-N-methylformamidopyrimidine (Fapy) from damaged DNA. Has a beta-lyase activity that nicks DNA 3' to the lesion. The sequence is that of N-glycosylase/DNA lyase OGG1 (OGG1) from Arabidopsis thaliana (Mouse-ear cress).